We begin with the raw amino-acid sequence, 263 residues long: Sulfur carrier protein FdhD (263 aa).

Catalysis depends on Cys-107, which acts as the Cysteine persulfide intermediate.

It belongs to the FdhD family.

It is found in the cytoplasm. Its function is as follows. Required for formate dehydrogenase (FDH) activity. Acts as a sulfur carrier protein that transfers sulfur from IscS to the molybdenum cofactor prior to its insertion into FDH. This Bacillus licheniformis (strain ATCC 14580 / DSM 13 / JCM 2505 / CCUG 7422 / NBRC 12200 / NCIMB 9375 / NCTC 10341 / NRRL NRS-1264 / Gibson 46) protein is Sulfur carrier protein FdhD.